Consider the following 410-residue polypeptide: Multifunctional CCA protein (410 aa).

ATP is bound by residues Gly-8 and Arg-11. CTP-binding residues include Gly-8 and Arg-11. 2 residues coordinate Mg(2+): Asp-21 and Asp-23. Arg-91, Arg-143, and Arg-146 together coordinate ATP. CTP-binding residues include Arg-91, Arg-143, and Arg-146. One can recognise an HD domain in the interval 232 to 333 (TGVHVMMVVD…VRLLERSDAI (102 aa)).

This sequence belongs to the tRNA nucleotidyltransferase/poly(A) polymerase family. Bacterial CCA-adding enzyme type 1 subfamily. In terms of assembly, monomer. Can also form homodimers and oligomers. It depends on Mg(2+) as a cofactor. Ni(2+) serves as cofactor.

The enzyme catalyses a tRNA precursor + 2 CTP + ATP = a tRNA with a 3' CCA end + 3 diphosphate. It carries out the reaction a tRNA with a 3' CCA end + 2 CTP + ATP = a tRNA with a 3' CCACCA end + 3 diphosphate. In terms of biological role, catalyzes the addition and repair of the essential 3'-terminal CCA sequence in tRNAs without using a nucleic acid template. Adds these three nucleotides in the order of C, C, and A to the tRNA nucleotide-73, using CTP and ATP as substrates and producing inorganic pyrophosphate. tRNA 3'-terminal CCA addition is required both for tRNA processing and repair. Also involved in tRNA surveillance by mediating tandem CCA addition to generate a CCACCA at the 3' terminus of unstable tRNAs. While stable tRNAs receive only 3'-terminal CCA, unstable tRNAs are marked with CCACCA and rapidly degraded. The chain is Multifunctional CCA protein from Paraburkholderia phytofirmans (strain DSM 17436 / LMG 22146 / PsJN) (Burkholderia phytofirmans).